A 128-amino-acid polypeptide reads, in one-letter code: Glycine cleavage system H protein (128 aa).

A Lipoyl-binding domain is found at 25–107; sequence TFKVGITDHA…YEAGWLFTVR (83 aa). At Lys-66 the chain carries N6-lipoyllysine.

Belongs to the GcvH family. In terms of assembly, the glycine cleavage system is composed of four proteins: P, T, L and H. It depends on (R)-lipoate as a cofactor.

Its function is as follows. The glycine cleavage system catalyzes the degradation of glycine. The H protein shuttles the methylamine group of glycine from the P protein to the T protein. The protein is Glycine cleavage system H protein of Kocuria rhizophila (strain ATCC 9341 / DSM 348 / NBRC 103217 / DC2201).